The following is a 254-amino-acid chain: Triosephosphate isomerase, cytosolic (254 aa).

Positions 10 and 12 each coordinate substrate. His96 functions as the Electrophile in the catalytic mechanism. Glu166 functions as the Proton acceptor in the catalytic mechanism.

Belongs to the triosephosphate isomerase family. As to quaternary structure, homodimer.

The protein resides in the cytoplasm. The enzyme catalyses D-glyceraldehyde 3-phosphate = dihydroxyacetone phosphate. It functions in the pathway carbohydrate biosynthesis; gluconeogenesis. Its pathway is carbohydrate degradation; glycolysis; D-glyceraldehyde 3-phosphate from glycerone phosphate: step 1/1. The polypeptide is Triosephosphate isomerase, cytosolic (TPIP1) (Petunia hybrida (Petunia)).